Here is a 358-residue protein sequence, read N- to C-terminus: PqqA peptide cyclase (358 aa).

The Radical SAM core domain maps to 4 to 219; the sequence is PSPPMSLLAE…VEAERAKGGL (216 aa). Cys18, Cys22, and Cys25 together coordinate [4Fe-4S] cluster.

Belongs to the radical SAM superfamily. PqqE family. Interacts with PqqD. The interaction is necessary for activity of PqqE. [4Fe-4S] cluster serves as cofactor.

The enzyme catalyses [PQQ precursor protein] + S-adenosyl-L-methionine = E-Y cross-linked-[PQQ precursor protein] + 5'-deoxyadenosine + L-methionine + H(+). It functions in the pathway cofactor biosynthesis; pyrroloquinoline quinone biosynthesis. Catalyzes the cross-linking of a glutamate residue and a tyrosine residue in the PqqA protein as part of the biosynthesis of pyrroloquinoline quinone (PQQ). The protein is PqqA peptide cyclase of Gluconobacter oxydans (strain 621H) (Gluconobacter suboxydans).